We begin with the raw amino-acid sequence, 170 residues long: Peroxidase 2 (170 aa).

An N-linked (GlcNAc...) asparagine glycan is attached at Asn9. His24 is a heme b binding site. Thr25 serves as a coordination point for Ca(2+). Cysteines 31 and 59 form a disulfide. Residues Asp73, Thr76, and Asp81 each coordinate Ca(2+).

Belongs to the peroxidase family. Classical plant (class III) peroxidase subfamily. It depends on Ca(2+) as a cofactor. Heme b is required as a cofactor.

The enzyme catalyses 2 a phenolic donor + H2O2 = 2 a phenolic radical donor + 2 H2O. In terms of biological role, removal of H(2)O(2), oxidation of toxic reductants, biosynthesis and degradation of lignin, suberization, auxin catabolism, response to environmental stresses such as wounding, pathogen attack and oxidative stress. These functions might be dependent on each isozyme/isoform in each plant tissue. Its function is as follows. Involved in defense response to powdery meldew fungus. The protein is Peroxidase 2 of Hordeum vulgare (Barley).